Here is a 490-residue protein sequence, read N- to C-terminus: Ketol-acid reductoisomerase (NADP(+)) (490 aa).

Residues 16–207 enclose the KARI N-terminal Rossmann domain; it reads INKCRFMKKE…GGHRAGVLES (192 aa). Residues 44–47, lysine 67, serine 77, and 107–109 each bind NADP(+); these read CGAQ and DKQ. Histidine 131 is a catalytic residue. Residue glycine 157 coordinates NADP(+). 2 KARI C-terminal knotted domains span residues 208 to 343 and 344 to 483; these read SFIA…TAPV and YNEK…MKKM. Mg(2+) is bound by residues aspartate 216, glutamate 220, glutamate 388, and glutamate 392. Serine 413 serves as a coordination point for substrate.

This sequence belongs to the ketol-acid reductoisomerase family. It depends on Mg(2+) as a cofactor.

The enzyme catalyses (2R)-2,3-dihydroxy-3-methylbutanoate + NADP(+) = (2S)-2-acetolactate + NADPH + H(+). The catalysed reaction is (2R,3R)-2,3-dihydroxy-3-methylpentanoate + NADP(+) = (S)-2-ethyl-2-hydroxy-3-oxobutanoate + NADPH + H(+). The protein operates within amino-acid biosynthesis; L-isoleucine biosynthesis; L-isoleucine from 2-oxobutanoate: step 2/4. Its pathway is amino-acid biosynthesis; L-valine biosynthesis; L-valine from pyruvate: step 2/4. In terms of biological role, involved in the biosynthesis of branched-chain amino acids (BCAA). Catalyzes an alkyl-migration followed by a ketol-acid reduction of (S)-2-acetolactate (S2AL) to yield (R)-2,3-dihydroxy-isovalerate. In the isomerase reaction, S2AL is rearranged via a Mg-dependent methyl migration to produce 3-hydroxy-3-methyl-2-ketobutyrate (HMKB). In the reductase reaction, this 2-ketoacid undergoes a metal-dependent reduction by NADPH to yield (R)-2,3-dihydroxy-isovalerate. This Buchnera aphidicola subsp. Acyrthosiphon pisum (strain 5A) protein is Ketol-acid reductoisomerase (NADP(+)).